We begin with the raw amino-acid sequence, 247 residues long: Virulence plasmid protein pGP6-D (247 aa).

The protein belongs to the UPF0137 (pGP6-D) family.

This is Virulence plasmid protein pGP6-D from Chlamydia trachomatis.